The following is a 119-amino-acid chain: uncharacterized protein (119 aa).

4 consecutive transmembrane segments (helical) span residues 3-23 (WVFL…MKLS), 29-49 (LIPS…LTLT), 58-78 (AYAV…FLFF), and 87-107 (VISI…EHVA).

Belongs to the drug/metabolite transporter (DMT) superfamily. Small multidrug resistance (SMR) (TC 2.A.7.1) family.

Its subcellular location is the cell membrane. This is an uncharacterized protein from Bacillus subtilis (strain 168).